Here is a 180-residue protein sequence, read N- to C-terminus: ATP-dependent protease subunit HslV (180 aa).

Residue threonine 7 is part of the active site. Na(+)-binding residues include alanine 162, cysteine 165, and threonine 168.

It belongs to the peptidase T1B family. HslV subfamily. As to quaternary structure, a double ring-shaped homohexamer of HslV is capped on each side by a ring-shaped HslU homohexamer. The assembly of the HslU/HslV complex is dependent on binding of ATP.

It is found in the cytoplasm. The enzyme catalyses ATP-dependent cleavage of peptide bonds with broad specificity.. With respect to regulation, allosterically activated by HslU binding. Its function is as follows. Protease subunit of a proteasome-like degradation complex believed to be a general protein degrading machinery. This is ATP-dependent protease subunit HslV from Dichelobacter nodosus (strain VCS1703A).